A 573-amino-acid chain; its full sequence is Putative 15-O-acetyltransferase SAT12 (573 aa).

A disordered region spans residues Met-1–Asp-40. A compositionally biased stretch (low complexity) spans Ser-7 to Ser-36.

The protein belongs to the trichothecene O-acetyltransferase family.

Its pathway is mycotoxin biosynthesis. Functionally, putative 15-O-acetyltransferase; part of the satratoxin SC2 cluster involved in the biosynthesis of satratoxins, trichothecene mycotoxins that are associated with human food poisonings. Satratoxins are suggested to be made by products of multiple gene clusters (SC1, SC2 and SC3) that encode 21 proteins in all, including polyketide synthases, acetyltransferases, and other enzymes expected to modify the trichothecene skeleton. SC1 encodes 10 proteins, SAT1 to SAT10. The largest are SAT8, which encodes a putative polyketide synthase (PKS) with a conventional non-reducing architecture, and SAT10, a putative protein containing four ankyrin repeats and thus may be involved in protein scaffolding. The putative short-chain reductase SAT3 may assist the PKS in some capacity. SAT6 contains a secretory lipase domain and acts probably as a trichothecene esterase. SAT5 encodes a putative acetyltransferase, and so, with SAT6, may affect endogenous protection from toxicity. The probable transcription factor SAT9 may regulate the expression of the SC1 cluster. SC2 encodes proteins SAT11 to SAT16, the largest of which encodes the putative reducing PKS SAT13. SAT11 is a cytochrome P450 monooxygenase, while SAT14 and SAT16 are probable acetyltransferases. The SC2 cluster may be regulated by the transcription factor SAT15. SC3 is a small cluster that encodes 5 proteins, SAT17 to SAT21. SAT21 is a putative MFS-type transporter which may have a role in exporting secondary metabolites. The four other proteins putatively encoded in SC3 include the taurine hydroxylase-like protein SAT17, the O-methyltransferase SAT18, the acetyltransferase SAT19, and the Cys6-type zinc finger SAT20, the latter being probably involved in regulation of SC3 expression. The protein is Putative 15-O-acetyltransferase SAT12 of Stachybotrys chartarum (strain CBS 109288 / IBT 7711) (Toxic black mold).